A 79-amino-acid chain; its full sequence is Small ribosomal subunit protein bS18 (79 aa).

The protein belongs to the bacterial ribosomal protein bS18 family. Part of the 30S ribosomal subunit. Forms a tight heterodimer with protein bS6.

In terms of biological role, binds as a heterodimer with protein bS6 to the central domain of the 16S rRNA, where it helps stabilize the platform of the 30S subunit. This Rhodopseudomonas palustris (strain BisB18) protein is Small ribosomal subunit protein bS18.